A 309-amino-acid polypeptide reads, in one-letter code: DDRGK domain-containing protein 1 (309 aa).

Residues 1-2 (MD) lie on the Lumenal side of the membrane. Residues 3–23 (LIILVGIAVALLVVIVTLYLL) traverse the membrane as a helical segment. Residues 24 to 309 (QKKNAAPETK…ISAGGGEASS (286 aa)) lie on the Cytoplasmic side of the membrane. Disordered stretches follow at residues 32–53 (TKVA…VPRR) and 79–175 (ALPA…KEER). The segment covering 87–96 (DHEDEGQVDG) has biased composition (acidic residues). Residues 107–175 (LDEKMGAKKR…DAERLAKEER (69 aa)) are compositionally biased toward basic and acidic residues. The stretch at 120–177 (EAKEQKRLQREQELHDREQRKVKEAKEEAERKQQEDLEAEAERKRVDAERLAKEERER) forms a coiled coil.

This sequence belongs to the DDRGK1 family. In terms of assembly, interacts with Atg9; the interaction is transient.

Its subcellular location is the endoplasmic reticulum membrane. In terms of biological role, substrate adapter for ufmylation, the covalent attachment of the ubiquitin-like modifier UFM1 to substrate proteins. Required for ufmylation of Atg9; protects the nervous system during aging, possibly by stabilizing Atg9 and supporting its function. This Drosophila melanogaster (Fruit fly) protein is DDRGK domain-containing protein 1.